The sequence spans 315 residues: Methionyl-tRNA formyltransferase (315 aa).

A (6S)-5,6,7,8-tetrahydrofolate-binding site is contributed by 113 to 116 (SILP).

Belongs to the Fmt family.

The catalysed reaction is L-methionyl-tRNA(fMet) + (6R)-10-formyltetrahydrofolate = N-formyl-L-methionyl-tRNA(fMet) + (6S)-5,6,7,8-tetrahydrofolate + H(+). In terms of biological role, attaches a formyl group to the free amino group of methionyl-tRNA(fMet). The formyl group appears to play a dual role in the initiator identity of N-formylmethionyl-tRNA by promoting its recognition by IF2 and preventing the misappropriation of this tRNA by the elongation apparatus. This is Methionyl-tRNA formyltransferase from Aliivibrio fischeri (strain MJ11) (Vibrio fischeri).